The following is a 475-amino-acid chain: Sulfate adenylyltransferase subunit 1 (475 aa).

The region spanning 25–240 (KSLLRFLTCG…VLETVEVINL (216 aa)) is the tr-type G domain. A G1 region spans residues 34-41 (GSVDDGKS). Position 34–41 (34–41 (GSVDDGKS)) interacts with GTP. The interval 92 to 96 (GITID) is G2. The interval 113-116 (DTPG) is G3. GTP is bound by residues 113 to 117 (DTPGH) and 168 to 171 (NKMD). The G4 stretch occupies residues 168–171 (NKMD). The tract at residues 206-208 (SAL) is G5.

Belongs to the TRAFAC class translation factor GTPase superfamily. Classic translation factor GTPase family. CysN/NodQ subfamily. As to quaternary structure, heterodimer composed of CysD, the smaller subunit, and CysN.

The enzyme catalyses sulfate + ATP + H(+) = adenosine 5'-phosphosulfate + diphosphate. Its pathway is sulfur metabolism; hydrogen sulfide biosynthesis; sulfite from sulfate: step 1/3. Its function is as follows. With CysD forms the ATP sulfurylase (ATPS) that catalyzes the adenylation of sulfate producing adenosine 5'-phosphosulfate (APS) and diphosphate, the first enzymatic step in sulfur assimilation pathway. APS synthesis involves the formation of a high-energy phosphoric-sulfuric acid anhydride bond driven by GTP hydrolysis by CysN coupled to ATP hydrolysis by CysD. The sequence is that of Sulfate adenylyltransferase subunit 1 from Sodalis glossinidius (strain morsitans).